A 558-amino-acid polypeptide reads, in one-letter code: Factor VII-activating protease (558 aa).

Residues 1 to 23 form the signal peptide; the sequence is MFVRMLVFRVLLLIALVGKSVIG. EGF-like domains are found at residues 71–107, 109–146, and 148–186; these read DDDP…SRCQ, AQNK…PDCS, and VLPA…KFCE. 18 disulfide bridges follow: Cys75-Cys86, Cys80-Cys95, Cys97-Cys106, Cys113-Cys123, Cys118-Cys134, Cys136-Cys145, Cys152-Cys163, Cys157-Cys174, Cys176-Cys185, Cys192-Cys274, Cys213-Cys255, Cys244-Cys269, Cys299-Cys433, Cys345-Cys361, Cys353-Cys422, Cys445-Cys513, Cys475-Cys491, and Cys503-Cys531. Residues 191-274 enclose the Kringle domain; sequence DCYVGDGYSY…KWEYCDVTVC (84 aa). Residues 312–553 enclose the Peptidase S1 domain; the sequence is IYGGFKSTAG…FLNWIKTTMH (242 aa). Residues His360 and Asp409 each act as charge relay system in the active site. Ser507 serves as the catalytic Charge relay system.

It belongs to the peptidase S1 family. In terms of assembly, heterodimer; disulfide-linked. Heterodimer of a 50 kDa heavy and a 27 kDa light chain linked by a disulfide bond. Proteolytic cleavage at Gly-23 or Met-27 can give rise to the 50 kDa heavy chain (HC) and cleavage at Arg-311 or Lys-317 can give rise to the 27 kDa light chain (LC). The HC can undergo further proteolytic cleavage giving rise to a 26 kDa fragment. The LC can undergo further proteolytic cleavage at Arg-311 leading to a 17-kDa fragment and at Arg-478 leading to a 8-kDa fragment. In terms of tissue distribution, liver and kidney.

Its subcellular location is the secreted. Its function is as follows. Cleaves the alpha-chain at multiple sites and the beta-chain between 'Lys-53' and 'Lys-54' but not the gamma-chain of fibrinogen and therefore does not initiate the formation of the fibrin clot and does not cause the fibrinolysis directly. It does not cleave (activate) prothrombin and plasminogen but converts the inactive single chain urinary plasminogen activator (pro-urokinase) to the active two chain form. Activates coagulation factor VII. May function as a tumor suppressor negatively regulating cell proliferation and cell migration. The sequence is that of Factor VII-activating protease from Mus musculus (Mouse).